Reading from the N-terminus, the 658-residue chain is Transcription factor E2-alpha (658 aa).

Disordered stretches follow at residues 42–82 (STQF…GTHY), 140–191 (SALS…YPAN), 276–313 (NPSV…GTAT), 331–372 (DHSS…SYDG), 460–558 (VPAQ…ERRV), and 628–658 (EEEK…VGHM). A Nuclear localization signal motif is present at residues 173-179 (PKKVRKV). The segment covering 276–303 (NPSVTSSFSSTPAQYGVSSHTPPISTGD) has biased composition (polar residues). Residues 333–344 (SSTNFSSTPSTP) are compositionally biased toward low complexity. A compositionally biased stretch (polar residues) spans 345–355 (VGSPQGITGSG). Positions 493–507 (PDIKRESKEDEENRS) are enriched in basic and acidic residues. Residues 533–544 (QDEDEDEDDDNL) are compositionally biased toward acidic residues. Positions 548–558 (QKAEREKERRV) are enriched in basic and acidic residues. The 54-residue stretch at 555 to 608 (ERRVANNARERLRVKDINEAFKELGRMCQLHLNSEKPQTKLLILHQAVSVILSL) folds into the bHLH domain.

As to quaternary structure, homodimer. Heterodimer; efficient DNA binding requires dimerization with another bHLH protein. Interacts with tgfb1i1.

It is found in the nucleus. Functionally, transcriptional regulator involved in the initiation of neuronal differentiation and mesenchymal to epithelial transition. Heterodimers between tcf3 and tissue-specific basic helix-loop-helix (bHLH) proteins play major roles in determining tissue-specific cell fate during embryogenesis, like muscle or early B-cell differentiation. Together with tcf15, required for the mesenchymal to epithelial transition. Dimers bind DNA on E-box motifs: 5'-CANNTG-3'. This is Transcription factor E2-alpha (tcf3) from Xenopus laevis (African clawed frog).